The sequence spans 217 residues: 3,4-dihydroxy-2-butanone 4-phosphate synthase (217 aa).

D-ribulose 5-phosphate contacts are provided by residues 37–38, D42, 150–154, and E174; these read RE and RGGHT. Position 38 (E38) interacts with Mg(2+). A Mg(2+)-binding site is contributed by H153.

This sequence belongs to the DHBP synthase family. As to quaternary structure, homodimer. Mg(2+) serves as cofactor. Requires Mn(2+) as cofactor.

It catalyses the reaction D-ribulose 5-phosphate = (2S)-2-hydroxy-3-oxobutyl phosphate + formate + H(+). It functions in the pathway cofactor biosynthesis; riboflavin biosynthesis; 2-hydroxy-3-oxobutyl phosphate from D-ribulose 5-phosphate: step 1/1. Its function is as follows. Catalyzes the conversion of D-ribulose 5-phosphate to formate and 3,4-dihydroxy-2-butanone 4-phosphate. In Proteus mirabilis (strain HI4320), this protein is 3,4-dihydroxy-2-butanone 4-phosphate synthase.